The following is a 454-amino-acid chain: F-box/WD repeat-containing protein 2 (454 aa).

An F-box domain is found at 54–101 (RDFLKLLPLELSFYLLKWLDPQTLLTCCLVSKQWNKVISACTEVWQTA). 7 WD repeats span residues 139–175 (FETS…LWDV), 179–213 (QCVY…CWEW), 217–255 (ARTQ…VWAL), 259–306 (TCLN…IWPI), 313–352 (KCLK…QWDF), 364–403 (PEIA…RWPL), and 410–452 (KRGS…LWKE). N6-acetyllysine is present on K298.

As to quaternary structure, directly interacts with SKP1 and CUL1.

In terms of biological role, substrate-recognition component of the SCF (SKP1-CUL1-F-box protein)-type E3 ubiquitin ligase complex. In Homo sapiens (Human), this protein is F-box/WD repeat-containing protein 2 (FBXW2).